The sequence spans 1014 residues: Chondroitin sulfate ABC exolyase (1014 aa).

An N-terminal signal peptide occupies residues 1 to 14 (MLILSFLCPAFLNA). Residues Ser24, Glu26, Asp50, His53, and Asp161 each contribute to the Ca(2+) site. Catalysis depends on proton acceptor residues His345 and His454. Tyr461 acts as the Proton donor in catalysis.

Belongs to the polysaccharide lyase 8 family. In terms of assembly, monomer. It depends on Ca(2+) as a cofactor. Mg(2+) serves as cofactor.

It is found in the periplasm. The enzyme catalyses Exolytic removal of Delta(4)-unsaturated disaccharide residues from the non-reducing ends of both polymeric chondroitin/dermatan sulfates and their oligosaccharide fragments.. Its activity is regulated as follows. Specific activity for chondroitin sulfate substrates increases moderately (2-fold) while an increase of 25-fold is observed for dermatan sulfate as substrate upon addition of Ca(2+) or Mg(2+) ions. Increasing the concentration of Na(+), K(+) or Cs(+) chloride from 0 to 0.1 M, increases the activity against all substrates. Further increases in salt concentration reduces the activity dramatically, with 50% inhibition occurring at 0.15 M and nearly complete inhibition at 0.4 M salt. The addition of 10 mM Ca(2+) or Mg(2+) ions increases the activity against chondroitin 4- and 6-sulfates by 2-3-fold, while the activity against dermatan sulfate increases much more significantly by 50-fold. Addition of Mn(2+) and Zn(2+) reduces activity against chondroitin sulfate substrates, but increases the activity against dermatan sulfate. Increasing the concentration of CaCl(2) with both chondroitin 4- and 6-sulfates from 0 to 0.04 M increases the activity. A further increase reduces activity, with 50% inhibition at 0.065-0.085 M and a complete inhibition of the reaction at 0.2 M. In case of dermatan sulfate, the addition of low concentration of CaCl(2) dramatically increases the activity from the basal level. The maximal activity is reached at 0.01 M CaCl(2). In terms of biological role, broad-specificity glycosaminoglycan lyase, which acts in an exolytic fashion degrading chondroitin sulfates and dermatan sulfate to yield only disaccharide products. Has a preference for chondroitin 4-sulfate over chondroitin 6-sulfate. Has extremely low activity against hyaluronic acid. Is not active against acharan sulfate, heparin or heparan sulfate. The chain is Chondroitin sulfate ABC exolyase (chonabc) from Bacteroides thetaiotaomicron.